Here is a 70-residue protein sequence, read N- to C-terminus: Large ribosomal subunit protein eL38 (70 aa).

The protein belongs to the eukaryotic ribosomal protein eL38 family.

This chain is Large ribosomal subunit protein eL38 (RpL38), found in Plutella xylostella (Diamondback moth).